A 268-amino-acid chain; its full sequence is MTNMIDPHLLLSAYATGIFPMSDSRETDEVYWVEPKKRGILPPDHFHLSRSLAKIIRSDRFLVTADRDFEAVIDLCAEPTEDRPDSWINPPIRAAYCQLHNLGYAHSIECWLDNRLVGGLYGVNLGYAFFGESMFSRVSNASKVALAWLVARLKVGNFSLLDCQFITDHLASMGAIEITREDYLKRLKSAVSSYFTDKETGNWNTLDRLSPLLHNKHSKTKENQFADADLPFTEGIALETDGTAPGEASFSLACPNGARIVQLLGQIS.

It belongs to the L/F-transferase family.

It localises to the cytoplasm. The enzyme catalyses N-terminal L-lysyl-[protein] + L-leucyl-tRNA(Leu) = N-terminal L-leucyl-L-lysyl-[protein] + tRNA(Leu) + H(+). It catalyses the reaction N-terminal L-arginyl-[protein] + L-leucyl-tRNA(Leu) = N-terminal L-leucyl-L-arginyl-[protein] + tRNA(Leu) + H(+). It carries out the reaction L-phenylalanyl-tRNA(Phe) + an N-terminal L-alpha-aminoacyl-[protein] = an N-terminal L-phenylalanyl-L-alpha-aminoacyl-[protein] + tRNA(Phe). Its function is as follows. Functions in the N-end rule pathway of protein degradation where it conjugates Leu, Phe and, less efficiently, Met from aminoacyl-tRNAs to the N-termini of proteins containing an N-terminal arginine or lysine. The chain is Leucyl/phenylalanyl-tRNA--protein transferase from Zymomonas mobilis subsp. mobilis (strain ATCC 31821 / ZM4 / CP4).